A 321-amino-acid polypeptide reads, in one-letter code: Annexin A5 (321 aa).

An N-acetylalanine modification is found at Ala-2. 4 Annexin repeats span residues Phe-15 to Lys-86, Pro-87 to Gln-158, Ala-170 to Lys-242, and Ser-246 to Gly-317. A Glycyl lysine isopeptide (Lys-Gly) (interchain with G-Cter in SUMO1); alternate cross-link involves residue Lys-29. A Glycyl lysine isopeptide (Lys-Gly) (interchain with G-Cter in SUMO2); alternate cross-link involves residue Lys-29. Lys-70, Lys-76, Lys-79, Lys-97, and Lys-101 each carry N6-acetyllysine. An N6-succinyllysine modification is found at Lys-290. Residues Leu-314–Asp-320 carry the [IL]-x-C-x-x-[DE] motif motif.

This sequence belongs to the annexin family. As to quaternary structure, monomer. Binds ATRX and EIF5B. In terms of processing, S-nitrosylation is induced by interferon-gamma and oxidatively-modified low-densitity lipoprotein (LDL(ox)) possibly implicating the iNOS-S100A8/9 transnitrosylase complex.

Its function is as follows. This protein is an anticoagulant protein that acts as an indirect inhibitor of the thromboplastin-specific complex, which is involved in the blood coagulation cascade. The sequence is that of Annexin A5 (ANXA5) from Bos taurus (Bovine).